The sequence spans 1269 residues: DNA-directed RNA polymerase subunit beta (1269 aa).

The protein belongs to the RNA polymerase beta chain family. The RNAP catalytic core consists of 2 alpha, 1 beta, 1 beta' and 1 omega subunit. When a sigma factor is associated with the core the holoenzyme is formed, which can initiate transcription.

The enzyme catalyses RNA(n) + a ribonucleoside 5'-triphosphate = RNA(n+1) + diphosphate. DNA-dependent RNA polymerase catalyzes the transcription of DNA into RNA using the four ribonucleoside triphosphates as substrates. The polypeptide is DNA-directed RNA polymerase subunit beta (Porphyromonas gingivalis (strain ATCC 33277 / DSM 20709 / CIP 103683 / JCM 12257 / NCTC 11834 / 2561)).